The chain runs to 253 residues: 1-(5-phosphoribosyl)-5-[(5-phosphoribosylamino)methylideneamino] imidazole-4-carboxamide isomerase (253 aa).

Catalysis depends on D8, which acts as the Proton acceptor. The active-site Proton donor is the D131.

The protein belongs to the HisA/HisF family.

Its subcellular location is the cytoplasm. The enzyme catalyses 1-(5-phospho-beta-D-ribosyl)-5-[(5-phospho-beta-D-ribosylamino)methylideneamino]imidazole-4-carboxamide = 5-[(5-phospho-1-deoxy-D-ribulos-1-ylimino)methylamino]-1-(5-phospho-beta-D-ribosyl)imidazole-4-carboxamide. Its pathway is amino-acid biosynthesis; L-histidine biosynthesis; L-histidine from 5-phospho-alpha-D-ribose 1-diphosphate: step 4/9. The protein is 1-(5-phosphoribosyl)-5-[(5-phosphoribosylamino)methylideneamino] imidazole-4-carboxamide isomerase of Polynucleobacter necessarius subsp. necessarius (strain STIR1).